A 366-amino-acid polypeptide reads, in one-letter code: Chorismate synthase (366 aa).

Residues R48 and R54 each coordinate NADP(+). FMN-binding positions include 125-127 (RSS), 238-239 (NA), G278, 293-297 (KPTSS), and R319.

The protein belongs to the chorismate synthase family. In terms of assembly, homotetramer. It depends on FMNH2 as a cofactor.

It carries out the reaction 5-O-(1-carboxyvinyl)-3-phosphoshikimate = chorismate + phosphate. Its pathway is metabolic intermediate biosynthesis; chorismate biosynthesis; chorismate from D-erythrose 4-phosphate and phosphoenolpyruvate: step 7/7. Functionally, catalyzes the anti-1,4-elimination of the C-3 phosphate and the C-6 proR hydrogen from 5-enolpyruvylshikimate-3-phosphate (EPSP) to yield chorismate, which is the branch point compound that serves as the starting substrate for the three terminal pathways of aromatic amino acid biosynthesis. This reaction introduces a second double bond into the aromatic ring system. This chain is Chorismate synthase, found in Thiobacillus denitrificans (strain ATCC 25259 / T1).